The following is a 1733-amino-acid chain: Collagen alpha-1(XXIV) chain (1733 aa).

The first 35 residues, 1 to 35, serve as a signal peptide directing secretion; sequence MHLGAYRTRHGKVSPTTETKLFLRFIVLCVVWISV. Residues 102–229 enclose the Laminin G-like domain; the sequence is ISLRQPLTVL…TVCQLEIMPS (128 aa). The N-linked (GlcNAc...) asparagine glycan is linked to Asn157. Residues 257-335 are disordered; it reads PHTAGMPTRH…SQEHQTPRAQ (79 aa). A compositionally biased stretch (polar residues) spans 312–324; the sequence is IPNNRSNGSATVH. 3 N-linked (GlcNAc...) asparagine glycosylation sites follow: Asn366, Asn396, and Asn448. A disordered region spans residues 505–1499; the sequence is YLRGPKGDPG…GPPGAPGPRR (995 aa). Collagen-like domains follow at residues 506 to 561, 577 to 636, 679 to 738, 742 to 801, 802 to 861, 886 to 945, 946 to 1005, 1006 to 1065, 1072 to 1131, 1135 to 1189, 1191 to 1215, 1220 to 1279, 1316 to 1375, 1376 to 1435, and 1439 to 1498; these read LRGP…PGLS, GLVG…KGVR, GPAG…KGEQ, GEPG…PGQN, GPEG…KGEV, GSIG…KGQR, GPRG…SGDV, GPAG…PGPR, GEEG…PGQR, GKKG…GIPG, RGHQ…PGED, GPPG…KGER, GVDG…KGEQ, GLPG…AGIV, and GPKG…PGPR. Positions 512 to 524 are enriched in pro residues; it reads DPGPPGPPGPMGI. Low complexity-rich tracts occupy residues 573–599 and 699–708; these read PGLL…LPGL and PGVTGSVGPA. The segment covering 776 to 789 has biased composition (pro residues); the sequence is DPGPQGPSGPPGPE. Pro residues predominate over residues 912–921; that stretch reads PGPPGAPGPM. Over residues 923 to 944 the composition is skewed to low complexity; sequence PLGLPGLVGARGAPGSPGPKGQ. Over residues 1045–1054 the composition is skewed to gly residues; that stretch reads GAKGDGGPAG. Residues 1056-1074 are compositionally biased toward low complexity; it reads AGATGEPGPRGEPGAPGEE. The span at 1084-1093 shows a compositional bias: gly residues; sequence GAPGGSGLPG. A compositionally biased stretch (low complexity) spans 1175 to 1205; sequence PLGLMGPEGEPGIPGYRGHQGQPGPSGLPGP. Over residues 1237 to 1246 the composition is skewed to basic and acidic residues; the sequence is TGEHGEEGYK. Positions 1323–1339 are enriched in low complexity; the sequence is YPGKPGLPGKQGLLGVP. A compositionally biased stretch (gly residues) spans 1352–1361; it reads GPQGGKGASG. 2 stretches are compositionally biased toward low complexity: residues 1371–1386 and 1434–1444; these read PKGE…VPGQ and IVGIVGPKGPI. Residues 1485 to 1495 show a composition bias toward pro residues; sequence QPGPPGPPGAP. The 200-residue stretch at 1534-1733 folds into the Fibrillar collagen NC1 domain; it reads SDIFKTLTYL…YIESNSVCFL (200 aa).

This sequence belongs to the fibrillar collagen family. Expressed in skeleton. Found at ossification centers of the craniofacial, axial and appendicular skeleton. Also expressed in retina and to a lower extent in cornea, skin and tendon.

Its subcellular location is the secreted. It is found in the extracellular space. The protein resides in the extracellular matrix. Involved in osteoblast differentiation. The polypeptide is Collagen alpha-1(XXIV) chain (Col24a1) (Mus musculus (Mouse)).